The chain runs to 828 residues: Glycerol-3-phosphate acyltransferase (828 aa).

The short motif at 309-314 (CHRSHI) is the HXXXXD motif element.

This sequence belongs to the GPAT/DAPAT family.

It localises to the cell inner membrane. The catalysed reaction is sn-glycerol 3-phosphate + an acyl-CoA = a 1-acyl-sn-glycero-3-phosphate + CoA. The protein operates within phospholipid metabolism; CDP-diacylglycerol biosynthesis; CDP-diacylglycerol from sn-glycerol 3-phosphate: step 1/3. The polypeptide is Glycerol-3-phosphate acyltransferase (Pseudomonas putida (strain GB-1)).